The chain runs to 209 residues: CASP-like protein 1A1 (209 aa).

The interval 1–26 (MEEAKHNEAEEAQGIEAREAKQIEAG) is disordered. Over 1 to 49 (MEEAKHNEAEEAQGIEAREAKQIEAGETSRSSRKLITFEPKLVINKGIS) the chain is Cytoplasmic. The helical transmembrane segment at 50 to 70 (VLGFVLRLFAVFGTIGSALAM) threads the bilayer. Over 71–95 (GTTHESVVSLSQLVLLKVKYSDLPT) the chain is Extracellular. A helical transmembrane segment spans residues 96–116 (LMFFVVANAISGGYLVLSLPV). Over 117-130 (SIFHIFSTQAKTSR) the chain is Cytoplasmic. The helical transmembrane segment at 131–151 (IILLVVDTVMLALVSSGASAA) threads the bilayer. Topologically, residues 152–183 (TATVYLAHEGNTTANWPPICQQFDGFCERISG) are extracellular. N-linked (GlcNAc...) asparagine glycosylation occurs at N162. A helical membrane pass occupies residues 184 to 204 (SLIGSFCAVILLMLIVINSAI). Topologically, residues 205–209 (SLSRH) are cytoplasmic.

This sequence belongs to the Casparian strip membrane proteins (CASP) family. In terms of assembly, homodimer and heterodimers. Expressed in the root endodermis.

The protein localises to the cell membrane. In Arabidopsis thaliana (Mouse-ear cress), this protein is CASP-like protein 1A1.